The sequence spans 67 residues: Large ribosomal subunit protein uL29 (67 aa).

The protein belongs to the universal ribosomal protein uL29 family.

This is Large ribosomal subunit protein uL29 from Alkaliphilus oremlandii (strain OhILAs) (Clostridium oremlandii (strain OhILAs)).